The primary structure comprises 466 residues: Purple acid phosphatase 6 (466 aa).

The first 20 residues, methionine 1–glycine 20, serve as a signal peptide directing secretion. The N-linked (GlcNAc...) asparagine glycan is linked to asparagine 88. Aspartate 164 lines the Fe cation pocket. A glycan (N-linked (GlcNAc...) asparagine) is linked at asparagine 172. Fe cation contacts are provided by aspartate 192 and tyrosine 195. Aspartate 192 contacts Zn(2+). Asparagine 229 and histidine 314 together coordinate Zn(2+). Residue asparagine 229 participates in substrate binding. Histidine 324 acts as the Proton donor in catalysis. A Zn(2+)-binding site is contributed by histidine 351. Residue histidine 351–histidine 353 participates in substrate binding. Histidine 353 is a binding site for Fe cation. N-linked (GlcNAc...) asparagine glycans are attached at residues asparagine 367 and asparagine 424.

It belongs to the metallophosphoesterase superfamily. Purple acid phosphatase family. Homodimer. Fe cation serves as cofactor. It depends on Zn(2+) as a cofactor. Specifically expressed in flowers.

It localises to the secreted. It catalyses the reaction a phosphate monoester + H2O = an alcohol + phosphate. The protein is Purple acid phosphatase 6 (PAP6) of Arabidopsis thaliana (Mouse-ear cress).